The following is a 204-amino-acid chain: MTRVKICGIRSLEEAIAAREAGAWAIGQVFAPSPRRLEVDIAAAINRELGQSILKIGVFVNEEAENLRRIVASCRLDMVQLHGDEEPAYLEEVSVPVIKSFRVRGSLELEQLKRWRPWAYLFDSYHPGVYGGTGESFDWSFLQEIARQERIILAGGLNTENVGRAIHQLRPLVVDVSSGVEYPSGGKDPAKIREFINIVQEQAT.

It belongs to the TrpF family.

It catalyses the reaction N-(5-phospho-beta-D-ribosyl)anthranilate = 1-(2-carboxyphenylamino)-1-deoxy-D-ribulose 5-phosphate. It participates in amino-acid biosynthesis; L-tryptophan biosynthesis; L-tryptophan from chorismate: step 3/5. This chain is N-(5'-phosphoribosyl)anthranilate isomerase, found in Syntrophomonas wolfei subsp. wolfei (strain DSM 2245B / Goettingen).